A 203-amino-acid chain; its full sequence is Peptide deformylase (203 aa).

Fe cation is bound by residues Cys-130 and His-173. Glu-174 is a catalytic residue. Position 177 (His-177) interacts with Fe cation.

The protein belongs to the polypeptide deformylase family. Requires Fe(2+) as cofactor.

It carries out the reaction N-terminal N-formyl-L-methionyl-[peptide] + H2O = N-terminal L-methionyl-[peptide] + formate. Removes the formyl group from the N-terminal Met of newly synthesized proteins. Requires at least a dipeptide for an efficient rate of reaction. N-terminal L-methionine is a prerequisite for activity but the enzyme has broad specificity at other positions. The polypeptide is Peptide deformylase (Streptococcus pneumoniae serotype 2 (strain D39 / NCTC 7466)).